The following is a 515-amino-acid chain: UPF0053 protein BUsg_314 (515 aa).

The next 7 helical transmembrane spans lie at 14–34 (LTLV…VAIL), 49–69 (IGLG…SWVV), 79–99 (NFFS…FLLF), 125–145 (FWAV…DAII), 150–170 (MVNQ…LMLL), 185–205 (VVVL…AEAL), and 207–227 (FYIP…IEIF). CBS domains are found at residues 309-368 (MTPR…NIDV) and 372-432 (ASQI…DADE).

Belongs to the UPF0053 family.

The protein resides in the cell membrane. This chain is UPF0053 protein BUsg_314, found in Buchnera aphidicola subsp. Schizaphis graminum (strain Sg).